The sequence spans 1280 residues: Papilin (1280 aa).

An N-terminal signal peptide occupies residues 1-20 (MQLFPLLFSLLLTSTPGSWA). 5 consecutive TSP type-1 domains span residues 27–81 (SDTW…ESCP), 305–362 (RGFS…QPCP), 363–422 (KTKR…ACNL), 424–482 (HCAV…EACP), and 485–540 (RGQA…QPCH). Disulfide bonds link Cys39–Cys75, Cys43–Cys80, and Cys54–Cys65. Disulfide bonds link Cys425-Cys464, Cys436-Cys476, and Cys440-Cys481. 2 disordered regions span residues 541–626 (LPQE…DCRH) and 672–715 (PQQA…PSEC). The segment covering 585-599 (AQSNPREGQDPNLSS) has biased composition (polar residues). Basic and acidic residues predominate over residues 706 to 715 (QAHEGEPSEC). 3 disulfides stabilise this stretch: Cys750–Cys800, Cys759–Cys783, and Cys775–Cys796. Residues 750 to 800 (CLLPSAQGSCGDWAARWYFVASVGRCNRFWYGGCHGNANNFASEQECMNTC) enclose the BPTI/Kunitz inhibitor domain. The segment at 800 to 902 (CRGQHGPRRP…AVPPTHSPSY (103 aa)) is disordered. A compositionally biased stretch (basic and acidic residues) spans 879-891 (IRPRVPGLDREAR). The 91-residue stretch at 900–990 (PSYRIRLAGS…EPQEIQLRVT (91 aa)) folds into the Ig-like C2-type 1 domain. Cys926 and Cys973 are disulfide-bonded. The span at 1002 to 1012 (PRHFPEPRNPD) shows a compositional bias: basic and acidic residues. The segment at 1002-1042 (PRHFPEPRNPDLGHGPPHRGTGAEAGGHRVLSPSHPRPATR) is disordered. Ig-like C2-type domains are found at residues 1039-1128 (PATR…VQLR) and 1133-1218 (LTIT…TEVK). Cystine bridges form between Cys1065–Cys1112 and Cys1154–Cys1202. The PLAC domain occupies 1231–1270 (LGKDCIDQPELANCALILQAQLCGNEYYSSFCCASCSRFQ).

Belongs to the papilin family.

The protein resides in the secreted. In Mus musculus (Mouse), this protein is Papilin (Papln).